Consider the following 519-residue polypeptide: DDB1- and CUL4-associated factor 17 (519 aa).

2 helical membrane passes run Val-186–Ile-206 and Gly-222–Ile-242.

Interacts with DDB1, CUL4A and CUL4B. In terms of tissue distribution, ubiquitously expressed in the embryo, with higher expression in brain, liver and skin tissues.

The protein localises to the membrane. It localises to the nucleus. The protein resides in the nucleolus. Its pathway is protein modification; protein ubiquitination. In terms of biological role, may function as a substrate receptor for CUL4-DDB1 E3 ubiquitin-protein ligase complex. This is DDB1- and CUL4-associated factor 17 (Dcaf17) from Mus musculus (Mouse).